Reading from the N-terminus, the 236-residue chain is Ribose-5-phosphate isomerase A (236 aa).

Substrate is bound by residues 31–34, 84–87, and 97–100; these read TGST, DGAD, and KGGG. The active-site Proton acceptor is glutamate 106. Residue lysine 124 coordinates substrate.

It belongs to the ribose 5-phosphate isomerase family. As to quaternary structure, homodimer.

It carries out the reaction aldehydo-D-ribose 5-phosphate = D-ribulose 5-phosphate. Its pathway is carbohydrate degradation; pentose phosphate pathway; D-ribose 5-phosphate from D-ribulose 5-phosphate (non-oxidative stage): step 1/1. Catalyzes the reversible conversion of ribose-5-phosphate to ribulose 5-phosphate. In Polynucleobacter asymbioticus (strain DSM 18221 / CIP 109841 / QLW-P1DMWA-1) (Polynucleobacter necessarius subsp. asymbioticus), this protein is Ribose-5-phosphate isomerase A.